We begin with the raw amino-acid sequence, 122 residues long: Large ribosomal subunit protein uL14 (122 aa).

It belongs to the universal ribosomal protein uL14 family. As to quaternary structure, part of the 50S ribosomal subunit. Forms a cluster with proteins L3 and L19. In the 70S ribosome, L14 and L19 interact and together make contacts with the 16S rRNA in bridges B5 and B8.

In terms of biological role, binds to 23S rRNA. Forms part of two intersubunit bridges in the 70S ribosome. This is Large ribosomal subunit protein uL14 from Gloeothece citriformis (strain PCC 7424) (Cyanothece sp. (strain PCC 7424)).